We begin with the raw amino-acid sequence, 261 residues long: Ribosomal RNA small subunit methyltransferase J (261 aa).

S-adenosyl-L-methionine-binding positions include 129 to 130 and D182; that span reads ER.

It belongs to the methyltransferase superfamily. RsmJ family.

The protein localises to the cytoplasm. The enzyme catalyses guanosine(1516) in 16S rRNA + S-adenosyl-L-methionine = N(2)-methylguanosine(1516) in 16S rRNA + S-adenosyl-L-homocysteine + H(+). Its function is as follows. Specifically methylates the guanosine in position 1516 of 16S rRNA. The sequence is that of Ribosomal RNA small subunit methyltransferase J from Desulfotalea psychrophila (strain LSv54 / DSM 12343).